The sequence spans 104 residues: Large ribosomal subunit protein uL24 (104 aa).

Belongs to the universal ribosomal protein uL24 family. Part of the 50S ribosomal subunit.

Functionally, one of two assembly initiator proteins, it binds directly to the 5'-end of the 23S rRNA, where it nucleates assembly of the 50S subunit. In terms of biological role, one of the proteins that surrounds the polypeptide exit tunnel on the outside of the subunit. This is Large ribosomal subunit protein uL24 from Bartonella bacilliformis (strain ATCC 35685 / KC583 / Herrer 020/F12,63).